The chain runs to 276 residues: MHANPLSSFNRAQHGNLTNVEASQVKSAGTSSTTNIDSKNIEEHVADRLSDLGRPDGGWFFEKSLGTLKNLNLEQLAGIHDVLKLTDGVKNIVSFGAREGGFELAMQFRHDLYRSQHPDENSPHDAATHYLDAISLQSNKFTKLEKLQHVDVFKMQNPFWDVGYKNGIAHAKKMAFFITPEWLGSDFCKQEFQWLSETKNKDIKSAFVIFKDVDLKSKNMTSIFNFADFHKSRVMMASTPPESGLNNVKIENSVDLNFKRLLTDRESWELNNFLGD.

A compositionally biased stretch (polar residues) spans 20–38 (VEASQVKSAGTSSTTNIDS). Residues 20–39 (VEASQVKSAGTSSTTNIDSK) form a disordered region. A TIR domain region spans residues 165–214 (KNGIAHAKKMAFFITPEWLGSDFCKQEFQWLSETKNKDIKSAFVIFKDVD). Glutamine 190 is an active-site residue.

Homodimer.

It is found in the host cytoplasm. The protein localises to the host cytosol. The catalysed reaction is NAD(+) = 3'cADPR + nicotinamide + H(+). Functionally, NAD(+) hydrolase (NADase) that cleaves NAD(+) into nicotinamide and 3' cyclic ADP-D-ribose (3'cADPR, v2-cADPR). Upon infiltration of A.thaliana with this bacteria an effector-triggered immunity-like phenotype (ETI-like, cell death with severe chlorosis) is seen, 3'cADPR levels rise while NAD(+) levels remain constant. Plant immune responses are suppressed. Triggers hypersensitive response-like cell death in Nicotiana tabacum cv. Xanthi and N.benthamiana when transiently expressed, depletes NAD(+) in N.benthamiana. Causes cell death upon induction in yeast due to NAD(+) depletion and/or 3'cADPR itself. Transgenic A.thaliana expressing HopAM1 suppresses its plant immune system upon challenge; the plants produce 3'cADPR without significantly depleting NAD(+). The protein is 3' cyclic ADP-D-ribose synthase HopAM1 of Pseudomonas syringae pv. tomato (strain ATCC BAA-871 / DC3000).